Here is a 129-residue protein sequence, read N- to C-terminus: Follitropin subunit beta (129 aa).

Residues 1–20 (MKTVQFCFLFCCWKAICCNS) form the signal peptide. Intrachain disulfides connect C21-C69, C35-C84, C38-C122, C46-C100, C50-C102, and C105-C112. N-linked (GlcNAc...) asparagine glycans are attached at residues N25 and N42.

Belongs to the glycoprotein hormones subunit beta family. Heterodimer. The active follitropin is a heterodimer composed of an alpha chain/CGA shared with other hormones and a unique beta chain/FSHB shown here.

It localises to the secreted. Functionally, together with the alpha chain CGA constitutes follitropin, the follicle-stimulating hormone, and provides its biological specificity to the hormone heterodimer. Binds FSHR, a G protein-coupled receptor, on target cells to activate downstream signaling pathways. Follitropin is involved in follicle development and spermatogenesis in reproductive organs. The sequence is that of Follitropin subunit beta (FSHB) from Aotus nancymaae (Ma's night monkey).